The sequence spans 204 residues: Demethylsterigmatocystin 6-O-methyltransferase stcP (204 aa).

Residues 48 to 49 (GG), Asp73, 93 to 94 (DF), and Arg109 contribute to the S-adenosyl-L-methionine site. The Proton acceptor role is filled by His113.

It belongs to the class I-like SAM-binding methyltransferase superfamily. Cation-independent O-methyltransferase family.

It catalyses the reaction 6-demethylsterigmatocystin + S-adenosyl-L-methionine = sterigmatocystin + S-adenosyl-L-homocysteine + H(+). It participates in mycotoxin biosynthesis; sterigmatocystin biosynthesis. In terms of biological role, norsolorinic acid reductase; part of the gene cluster that mediates the biosynthesis of sterigmatocystin (ST), a polyketide-derived furanocoumarin which is part of the most toxic and carcinogenic compounds among the known mycotoxins. The first step in the biosynthesis of sterigmatocystin is the production of hexanoate by the fatty acid synthase (FAS) units stcJ and stcK. The polyketide backbone is assembled by the non-reducing polyketide synthase stcA by condensation of the starter hexanoyl-CoA and 7 malonyl-CoA extender units followed by cyclization and release of norsolorinic acid. Norsolorinic acid is the first stable intermediate in the biosynthesis of sterigmatocystin and is converted into averantin (AVN) by the ketoreductase stcE which reduces the hexanoate ketone to an alcohol. Averantin is then oxidized into 5'-hydroxyaverantin (HAVN) by the cytochrome P450 monooxygenase stcF. 5'-hydroxyaverantin is further converted to 5'-oxyaverantin (OAVN) by the 5'-hydroxyaverantin dehydrogenase stcG. The next step is the conversion of OAVN into averufin (AVF) which is catalyzed by a yet to be identified enzyme. The cytochrome P450 monooxygenase stcB and the flavin-binding monooxygenase stcW are both required for the conversion of averufin to 1-hydroxyversicolorone. The esterase stcI probably catalyzes the formation of versiconal hemiacetal acetate from 1-hydroxyversicolorone. The oxydoreductase stcN then probably catalyzes the biosynthetic step from versiconal to versicolorin B (VERB). The next step is performed by the versicolorin B desaturase stcL to produce versicolorin A (VERA). The ketoreductase stcU and the cytochrome P450 monooxygenase stcS are involved in the conversion of versicolorin A to demethylsterigmatocystin. The Baeyer-Villiger oxidas stcQ and the reductase stcR might be involved in the biosynthetic step from versicolorin A to demethylsterigmatocystin. The final step in the biosynthesis of sterigmatocystin is the methylation of demethylsterigmatocystin catalyzed by the methyltransferase stcP. The polypeptide is Demethylsterigmatocystin 6-O-methyltransferase stcP (Emericella nidulans (strain FGSC A4 / ATCC 38163 / CBS 112.46 / NRRL 194 / M139) (Aspergillus nidulans)).